Reading from the N-terminus, the 209-residue chain is Thymidylate kinase (209 aa).

7–14 (GVEGSGKS) is an ATP binding site.

It belongs to the thymidylate kinase family.

It catalyses the reaction dTMP + ATP = dTDP + ADP. In terms of biological role, phosphorylation of dTMP to form dTDP in both de novo and salvage pathways of dTTP synthesis. The chain is Thymidylate kinase from Solidesulfovibrio magneticus (strain ATCC 700980 / DSM 13731 / RS-1) (Desulfovibrio magneticus).